A 221-amino-acid polypeptide reads, in one-letter code: MTERKQGAAAPRPLNRPQGESPKATKLPATLLYADPLPDDLVEVGYVGAAYGIRGWIKVEPHANDASALLHARRWWLLTPPQAGLVATAEASRAQAVCVRVAQSREHSGTVVAQATGVSDRNLAEALKGRRVWIRRADFPAPEENEFYWVDLIGCAVSNEQGELLGEVSGLIDNGAHQILQVAYALPDGKAGERLVPFVDAFLRTVDTAGKRIVVDWGLDY.

Residues 1–23 (MTERKQGAAAPRPLNRPQGESPK) are disordered. A PRC barrel domain is found at 144 to 221 (ENEFYWVDLI…RIVVDWGLDY (78 aa)).

Belongs to the RimM family. As to quaternary structure, binds ribosomal protein uS19.

The protein resides in the cytoplasm. In terms of biological role, an accessory protein needed during the final step in the assembly of 30S ribosomal subunit, possibly for assembly of the head region. Essential for efficient processing of 16S rRNA. May be needed both before and after RbfA during the maturation of 16S rRNA. It has affinity for free ribosomal 30S subunits but not for 70S ribosomes. The chain is Ribosome maturation factor RimM from Cupriavidus pinatubonensis (strain JMP 134 / LMG 1197) (Cupriavidus necator (strain JMP 134)).